Reading from the N-terminus, the 426-residue chain is UPF0597 protein CLD_2825 (426 aa).

This sequence belongs to the UPF0597 family.

The chain is UPF0597 protein CLD_2825 from Clostridium botulinum (strain Okra / Type B1).